We begin with the raw amino-acid sequence, 165 residues long: Nutritionally-regulated adipose and cardiac-enriched protein (165 aa).

A disordered region spans residues 1–47; that stretch reads MRSAARVSRSNSHPRTRHPTRENEGTTWGSQPSRTERDGDRKCPPSI. A compositionally biased stretch (basic and acidic residues) spans 34 to 43; the sequence is RTERDGDRKC. A helical transmembrane segment spans residues 112–132; the sequence is GSLFLWLTLCALLGVVLVLYC.

As to expression, predominantly expressed in white adipose tissue (at protein level) and brown adipose tissue. Also detected in heart.

The protein resides in the cell membrane. This is Nutritionally-regulated adipose and cardiac-enriched protein (Nrac) from Mus musculus (Mouse).